The primary structure comprises 406 residues: Cysteine desulfurase (406 aa).

Lysine 226 is modified (N6-(pyridoxal phosphate)lysine). Catalysis depends on cysteine 364, which acts as the Cysteine persulfide intermediate.

It belongs to the class-V pyridoxal-phosphate-dependent aminotransferase family. Csd subfamily. Homodimer. Interacts with SufE and the SufBCD complex composed of SufB, SufC and SufD. The interaction with SufE is required to mediate the direct transfer of the sulfur atom from the S-sulfanylcysteine. Pyridoxal 5'-phosphate serves as cofactor.

The protein localises to the cytoplasm. The enzyme catalyses (sulfur carrier)-H + L-cysteine = (sulfur carrier)-SH + L-alanine. It catalyses the reaction L-selenocysteine + AH2 = hydrogenselenide + L-alanine + A + H(+). It functions in the pathway cofactor biosynthesis; iron-sulfur cluster biosynthesis. In terms of biological role, cysteine desulfurases mobilize the sulfur from L-cysteine to yield L-alanine, an essential step in sulfur metabolism for biosynthesis of a variety of sulfur-containing biomolecules. Component of the suf operon, which is activated and required under specific conditions such as oxidative stress and iron limitation. Acts as a potent selenocysteine lyase in vitro, that mobilizes selenium from L-selenocysteine. Selenocysteine lyase activity is however unsure in vivo. In Salmonella dublin (strain CT_02021853), this protein is Cysteine desulfurase.